The following is a 230-amino-acid chain: Ribosome-recycling factor, mitochondrial (230 aa).

The transit peptide at 1-24 (MILTTARLNCRPVTVPRLFNRSFS) directs the protein to the mitochondrion.

The protein belongs to the RRF family.

Its subcellular location is the mitochondrion. Functionally, necessary for protein synthesis in mitochondria. Functions as a ribosome recycling factor in mitochondria. This is Ribosome-recycling factor, mitochondrial (RRF1) from Saccharomyces cerevisiae (strain ATCC 204508 / S288c) (Baker's yeast).